Consider the following 174-residue polypeptide: von Hippel-Lindau tumor suppressor homolog (174 aa).

The protein belongs to the VHL family. Interacts with hif-1 (hydroxylated on 'Pro-621'); the interaction induces hif-1 degradation. May be a component of the cullin E3 ubiquitin ligase complex.

Its pathway is protein modification; protein ubiquitination. Its function is as follows. Involved in the response to variation in environmental oxygen levels by targeting the hypoxia-inducible transcription factor hif-1 for proteasomal degradation when oxygen levels are normal (around 20%). By regulating hif-1 expression, plays a role in iron homeostasis, aging, heat acclimation and progeny size. Mediates resistance to enteropathogenic E.coli. Mediates susceptibility to B.thuringiensis pore-forming toxins. Not involved in P.aeruginosa susceptibility. The protein is von Hippel-Lindau tumor suppressor homolog of Caenorhabditis elegans.